The sequence spans 567 residues: DNA ligase B (567 aa).

Lys-126 serves as the catalytic N6-AMP-lysine intermediate.

This sequence belongs to the NAD-dependent DNA ligase family. LigB subfamily.

The catalysed reaction is NAD(+) + (deoxyribonucleotide)n-3'-hydroxyl + 5'-phospho-(deoxyribonucleotide)m = (deoxyribonucleotide)n+m + AMP + beta-nicotinamide D-nucleotide.. Its function is as follows. Catalyzes the formation of phosphodiester linkages between 5'-phosphoryl and 3'-hydroxyl groups in double-stranded DNA using NAD as a coenzyme and as the energy source for the reaction. The sequence is that of DNA ligase B from Pseudomonas putida (strain W619).